We begin with the raw amino-acid sequence, 3476 residues long: Abnormal spindle-like microcephaly-associated protein homolog (3476 aa).

Residues 1 to 34 (MANRRVGRGCWEVSPTERRPPAGLRGPATEEEAS) form a disordered region. Residues S280, S283, S367, S392, S425, and S605 each carry the phosphoserine modification. The Calponin-homology (CH) 1 domain maps to 920-1056 (KASKEILLAF…LLWKIAFAFQ (137 aa)). The stretch at 1057-1078 (VDISLNLDQLKEEIAFLKHTKS) forms a coiled coil. Residue S1103 is modified to Phosphoserine. Residues 1110–1261 (SENIKLLMDW…YLSFLCARLL (152 aa)) enclose the Calponin-homology (CH) 2 domain. IQ domains lie at 1347-1378 (QNKA…IILQ), 1393-1422 (YLWA…MLKS), 1582-1613 (LKKT…VIIQ), 1605-1634 (MKKA…KTRS), 1632-1661 (TRSA…SVIK), 1655-1684 (ILTS…TTIK), 1728-1757 (MRES…AVIS), 1751-1782 (QRKA…IVIQ), 1801-1830 (VKKA…AALK), 1824-1853 (QSIA…SIIK), 1874-1903 (TKAA…AALK), 1897-1928 (EHQA…LVIQ), 1947-1978 (LRHA…IIIQ), 1970-2001 (QXKC…LLIQ), 2020-2049 (TKAA…AAVT), 2043-2074 (CNKA…IIIQ), 2093-2124 (LKKT…TFIK), 2116-2147 (MHRA…IVIQ), 2239-2270 (LRHS…TLIQ), 2262-2293 (MHVA…VWIQ), 2311-2342 (VQNA…TFIQ), 2334-2365 (MHRA…VVIQ), 2384-2415 (QRRS…TLIQ), 2407-2438 (MHSS…IFVQ), 2457-2488 (LRKA…VLIQ), 2530-2561 (QWHS…IIIQ), 2624-2653 (QHQA…TVVS), 2665-2696 (RTQA…TLIQ), 2688-2719 (MHRA…VVIQ), 2738-2767 (VQKS…EKMA), 2814-2845 (QSRA…RIQF), 2859-2890 (QKRA…VVLQ), 2909-2938 (IRSS…STIK), 2932-2963 (IKNS…KIQA), 2954-2985 (KVKA…KIIQ), 3029-3060 (RHRA…LIIQ), 3079-3110 (FKKS…RLLH), and 3203-3234 (FTSG…IRLS).

The protein resides in the cytoplasm. It is found in the cytoskeleton. Its subcellular location is the spindle. It localises to the nucleus. Its function is as follows. Probable role in mitotic spindle regulation and coordination of mitotic processes. May have a preferential role in regulating neurogenesis. This chain is Abnormal spindle-like microcephaly-associated protein homolog (ASPM), found in Macaca fascicularis (Crab-eating macaque).